Here is a 178-residue protein sequence, read N- to C-terminus: Gamma-crystallin S (178 aa).

N-acetylserine is present on serine 2. An N-terminal arm region spans residues 2–5 (SKTG). Beta/gamma crystallin 'Greek key' domains are found at residues 6-44 (GKIS…RVEG) and 45-87 (GTWA…RAVH). The tract at residues 88 to 93 (LSSGGQ) is connecting peptide. Beta/gamma crystallin 'Greek key' domains are found at residues 94-134 (AKIQ…KVVE) and 135-177 (GTWI…RRIV).

The protein belongs to the beta/gamma-crystallin family. Monomer.

Its function is as follows. Crystallins are the dominant structural components of the vertebrate eye lens. In Mus musculus (Mouse), this protein is Gamma-crystallin S (Crygs).